A 170-amino-acid polypeptide reads, in one-letter code: MVDYKKVYLLNISIRRFTKRRSMTKYEEDKKIRIIEEYFDGNEDIPPRLSFLISGISVSTRLFRLLYPHKMSQVPSVLEEVKKYLNGRNGIEVVLDYFPLYLPKPILLGLLNEALLKKKARYNQIRNDPFKSEYDKQRALAMLEESLKDIQIFIEYLKKEDGLQSIQKLA.

This is an uncharacterized protein from Acidianus convivator (ATV).